A 359-amino-acid chain; its full sequence is Mineralocorticoid receptor (359 aa).

The nuclear receptor DNA-binding region spans 1–49 (FKRAVEGQHNYLCAGRNDCIIDKIRRKNCPACRVRKCLQAGMNLGARKS). Cys-13, Cys-19, Cys-29, and Cys-32 together coordinate Zn(2+). The NR C4-type zinc finger occupies 13 to 37 (CAGRNDCIIDKIRRKNCPACRVRKC). A disordered region spans residues 48 to 96 (KSKKPGKLKGVNEDSTPTKEGGQTCPGSGGGYLSSGEKELSTSPTNALV). The interval 50-107 (KKPGKLKGVNEDSTPTKEGGQTCPGSGGGYLSSGEKELSTSPTNALVPHGPGGGLVTP) is hinge. Residues 108–339 (YLPPSICSVL…EFPEMLVEII (232 aa)) form the NR LBD domain. 21-hydroxyprogesterone-binding residues include Asn-145 and Gln-151. Aldosterone contacts are provided by Asn-145 and Gln-151. Asn-145 and Gln-151 together coordinate progesterone. Residues 157–160 (KWAK) are important for coactivator binding. 21-hydroxyprogesterone contacts are provided by Arg-192 and Thr-320. Aldosterone is bound by residues Arg-192 and Thr-320. Positions 192 and 320 each coordinate progesterone.

Belongs to the nuclear hormone receptor family. NR3 subfamily.

The protein localises to the cytoplasm. The protein resides in the nucleus. In terms of biological role, receptor for both mineralocorticoids (MC) such as cortisol. Binds to mineralocorticoid response elements (MRE) and transactivates target genes. The effect of MC is to increase ion and water transport and thus raise extracellular fluid volume and blood pressure and lower potassium levels. The chain is Mineralocorticoid receptor (nr3c2) from Oncorhynchus mykiss (Rainbow trout).